Reading from the N-terminus, the 160-residue chain is Cytochrome c-type biogenesis protein CcmE (160 aa).

Residues 1–8 are Cytoplasmic-facing; it reads MNPRRKKR. A helical; Signal-anchor for type II membrane protein transmembrane segment spans residues 9 to 29; it reads LGIILAIFFGISATVGLMVYA. Residues 30–160 are Periplasmic-facing; the sequence is LNQNMDLFYT…TTEQKEGNAQ (131 aa). 2 residues coordinate heme: histidine 128 and tyrosine 132.

The protein belongs to the CcmE/CycJ family.

Its subcellular location is the cell inner membrane. Functionally, heme chaperone required for the biogenesis of c-type cytochromes. Transiently binds heme delivered by CcmC and transfers the heme to apo-cytochromes in a process facilitated by CcmF and CcmH. This chain is Cytochrome c-type biogenesis protein CcmE, found in Vibrio atlanticus (strain LGP32) (Vibrio splendidus (strain Mel32)).